A 585-amino-acid polypeptide reads, in one-letter code: UvrABC system protein C (585 aa).

Positions 15-90 (AEPGVYQFLE…IKRHQPRYNV (76 aa)) constitute a GIY-YIG domain. A UVR domain is found at 198 to 233 (GILADPLRQEMQAAATAEEFERAANIRDRLAVIESF).

The protein belongs to the UvrC family. Interacts with UvrB in an incision complex.

It is found in the cytoplasm. Functionally, the UvrABC repair system catalyzes the recognition and processing of DNA lesions. UvrC both incises the 5' and 3' sides of the lesion. The N-terminal half is responsible for the 3' incision and the C-terminal half is responsible for the 5' incision. In Haloquadratum walsbyi (strain DSM 16790 / HBSQ001), this protein is UvrABC system protein C.